Reading from the N-terminus, the 248-residue chain is Ras-like protein family member 11B (248 aa).

Residues 29–246 (AGRRLVKIAV…ALSAKVRTVT (218 aa)) are small GTPase-like. GTP contacts are provided by residues 40–47 (GASGVGKT), 87–91 (DTPGI), and 152–155 (NKAD). The disordered stretch occupies residues 205–229 (QQPSGTPEKRRTSLIPRPKSPNMQD).

This sequence belongs to the small GTPase superfamily. Ras family.

It catalyses the reaction GTP + H2O = GDP + phosphate + H(+). This chain is Ras-like protein family member 11B, found in Bos taurus (Bovine).